We begin with the raw amino-acid sequence, 257 residues long: Short chain dehydrogenase helC (257 aa).

A signal peptide spans 1-22; the sequence is MNTAIITGAAQGVGLCIAEALA. Position 13 (V13) interacts with NADP(+). N46 is a glycosylation site (N-linked (GlcNAc...) asparagine). D60 and N87 together coordinate NADP(+). An N-linked (GlcNAc...) asparagine glycan is attached at N110. NADP(+) is bound by residues Y154, K158, I185, and T187. Y154 serves as the catalytic Proton acceptor. The active-site Lowers pKa of active site Tyr is the K158.

This sequence belongs to the short-chain dehydrogenases/reductases (SDR) family.

Its pathway is mycotoxin biosynthesis. Its function is as follows. Short chain dehydrogenase; part of the gene cluster that mediates the biosynthesis of helvolic acid, an antibacterial nortriterpenoid. Protostadienol synthase helA cyclizes (3S)-oxidosqualene to (17Z)-protosta-17(20),24-dien-3-beta-ol (protostadienol). The synthesis of protostadienol is followed by several steps of monooxygenation, dehydrogenation, and acyl transfer to yield the final helvolic acid. Following the cyclization to the tetracyclic protostadienol by helA, cytochrome P450 monooxygenases helB1-mediated and helB2-mediated oxidation at C-4 and C-16, acyltransferase helD2-dependent acetylation of 16-OH, oxidation of C-21 by cytochrome P450 monooxygenase helB4, and short chain dehydrogenase helC-dependent oxidative decarboxylation yield the fusidane skeleton. This intermediate is further modified in three additional steps mediated by the cytochrome P450 monooxygenase helB3, the acyltransferase helD1, and the 3-ketosteroid 1-dehydrogenase helE to give helvolic acid. Compared with the late stages in the biosynthesis of helvolic acid, enzymes involved in the early stage modifications act in a relatively strict order. The hydroxylation of C-16 by helB1 and subsequent acetylation by helD2 should occur before the helB3-mediated oxidation of C-21. C-4 demethylation in fusidane-type antibiotics proceeds in an unusual manner though it is also achieved by oxidative decarboxylation. The methyl group at C-4 beta position is oxidized by helB1 and subsequently removed by the short chain dehydrogenase helC. The sequence is that of Short chain dehydrogenase helC from Aspergillus fumigatus (strain ATCC MYA-4609 / CBS 101355 / FGSC A1100 / Af293) (Neosartorya fumigata).